We begin with the raw amino-acid sequence, 692 residues long: Zinc finger protein 180 (692 aa).

Residues 72 to 145 (VNFKIVTVDF…GVKIERFTRD (74 aa)) enclose the KRAB domain. Glycyl lysine isopeptide (Lys-Gly) (interchain with G-Cter in SUMO2) cross-links involve residues lysine 138, lysine 159, lysine 168, lysine 191, lysine 198, lysine 226, lysine 304, lysine 313, and lysine 330. C2H2-type zinc fingers lie at residues 353–375 (FECN…QRTH), 381–403 (YECS…QRTH), 409–431 (YRCN…QRTH), 437–459 (YECN…QRTH), 465–487 (YECN…QRIH), 493–515 (YECN…QRTH), 521–543 (FECN…QRTH), 549–571 (YECS…QRIH), 577–599 (YECN…QRTH), 605–627 (YECS…QRTH), 633–655 (FECN…QRTH), and 661–683 (FTCI…QATH).

It belongs to the krueppel C2H2-type zinc-finger protein family.

Its subcellular location is the nucleus. Its function is as follows. May be involved in transcriptional regulation. The polypeptide is Zinc finger protein 180 (ZNF180) (Homo sapiens (Human)).